The chain runs to 355 residues: Vacuolar protein sorting-associated protein 37C (355 aa).

Ser29 carries the phosphoserine modification. In terms of domain architecture, VPS37 C-terminal spans 78–167 (VERCQEQKAK…RKPRASQELA (90 aa)). The disordered stretch occupies residues 159 to 355 (KPRASQELAG…PPPGPAWPGY (197 aa)). 2 stretches are compositionally biased toward pro residues: residues 170-186 (APPPRPPPPVRPVPQGT) and 194-214 (PQPPLAMPPYPLPYSPSPSLP). Positions 291–304 (APSPGYPQQSPYPA) are enriched in low complexity. Pro residues predominate over residues 321-355 (PGQPQPSVPLQPPYPPGPAPPYGFPPPPGPAWPGY).

It belongs to the VPS37 family. In terms of assembly, component of the ESCRT-I complex (endosomal sorting complex required for transport I) which consists of TSG101, VPS28, a VPS37 protein (VPS37A to -D) and MVB12A or MVB12B in a 1:1:1:1 stoichiometry. Interacts with TSG101, VPS28, MVB12A and MVB12B. Component of the ESCRT-I complex (endosomal sorting complex required for transport I) which consists of TSG101, VPS28, a VPS37 protein (VPS37A to -D) and UBAP1 in a 1:1:1:1 stoichiometry. Interacts with HGS and STAM2. Interacts with CEP55. Phosphorylated by TBK1.

The protein localises to the late endosome membrane. Functionally, component of the ESCRT-I complex, a regulator of vesicular trafficking process. Required for the sorting of endocytic ubiquitinated cargos into multivesicular bodies. May be involved in cell growth and differentiation. The chain is Vacuolar protein sorting-associated protein 37C (VPS37C) from Homo sapiens (Human).